A 1278-amino-acid polypeptide reads, in one-letter code: Dynactin subunit 1 (1278 aa).

The segment at 1–25 (MAQSKRHVYSRTPSGSRMSAEASAR) is disordered. The CAP-Gly domain maps to 48–90 (GATLFATGKWVGVILDEAKGKNDGTVQGRKYFTCDEGHGIFVR). Residues 100-223 (GADTTSPETP…SKEEEGLRAQ (124 aa)) form a disordered region. Residues 102–114 (DTTSPETPDSSAS) show a composition bias toward polar residues. Thr-108 carries the post-translational modification Phosphothreonine. Positions 129-152 (SKLRGLKPKKAPTARKTTTRRPKP) are enriched in basic residues. Thr-145, Thr-146, and Thr-147 each carry phosphothreonine; by SLK. Positions 161-184 (AGASSSLGPSGSASAGELSSSEPS) are enriched in low complexity. Ser-179 bears the Phosphoserine; by PLK1 mark. Ser-212 bears the Phosphoserine; by CDK1 mark. Coiled-coil stretches lie at residues 213–547 (PSKE…RQQQ), 943–1049 (LKLE…EGLR), and 1182–1211 (SAQL…KETV). Basic and acidic residues predominate over residues 214–223 (SKEEEGLRAQ). Positions 911-1278 (EYDAERPPSK…LHQLHSRLIS (368 aa)) are interaction with HPS6.

This sequence belongs to the dynactin 150 kDa subunit family. As to quaternary structure, monomer and homodimer. Subunit of dynactin, a multiprotein complex part of a tripartite complex with dynein and a adapter, such as BICDL1, BICD2 or HOOK3. The dynactin complex is built around ACTR1A/ACTB filament and consists of an actin-related filament composed of a shoulder domain, a pointed end and a barbed end. Its length is defined by its flexible shoulder domain. The soulder is composed of 2 DCTN1 subunits, 4 DCTN2 and 2 DCTN3. DCTN1/p150(glued) binds directly to microtubules and to cytoplasmic dynein. The 4 DCNT2 (via N-terminus) bind the ACTR1A filament and act as molecular rulers to determine the length. The pointed end is important for binding dynein-dynactin cargo adapters. Consists of 4 subunits: ACTR10, DCNT4, DCTN5 and DCTN6. The barbed end is composed of a CAPZA1:CAPZB heterodimers, which binds ACTR1A/ACTB filament and dynactin and stabilizes dynactin. Interacts with the C-terminus of MAPRE1, MAPRE2 and MAPRE3. Interacts (via C-terminus) with SNX6. Interacts with CLN3, DYNAP, ECPAS and FBXL5. Interacts with MISP; this interaction regulates its distribution at the cell cortex. Interacts with CEP131. Interacts with CEP126. Interacts with CLIP1. Interacts with dynein intermediate chain and dynein heavy chain. Interacts with PLK1 (via POLO-box domain). Interacts with TBCB. Binds preferentially to tyrosinated microtubules than to detyrosinated microtubules. Interacts with PARD6A. Interacts with HPS6. Interacts with KIF3A. Interacts with BICD2. Interacts with DST (isoform 9). Interacts with DST (isoform 1). Identified in a complex with MREG and RILP. Interacts with BCCIP (isoform 2/alpha). Interacts with DCDC1. Interacts with AKNA. Interacts with DYNC1I2. Interacts with RUFY3 and RUFY4. In terms of processing, ubiquitinated by a SCF complex containing FBXL5, leading to its degradation by the proteasome. Post-translationally, phosphorylation by SLK at Thr-145, Thr-146 and Thr-147 targets DCTN1 to the centrosome. It is uncertain if SLK phosphorylates all three threonines or one or two of them. PLK1-mediated phosphorylation at Ser-179 is essential for its localization in the nuclear envelope, promotes its dissociation from microtubules during early mitosis and positively regulates nuclear envelope breakdown during prophase. As to expression, brain.

It is found in the cytoplasm. Its subcellular location is the cytoskeleton. The protein resides in the microtubule organizing center. It localises to the centrosome. The protein localises to the centriole. It is found in the spindle. Its subcellular location is the nucleus envelope. The protein resides in the cell cortex. In terms of biological role, part of the dynactin complex that activates the molecular motor dynein for ultra-processive transport along microtubules. Plays a key role in dynein-mediated retrograde transport of vesicles and organelles along microtubules by recruiting and tethering dynein to microtubules. Binds to both dynein and microtubules providing a link between specific cargos, microtubules and dynein. Essential for targeting dynein to microtubule plus ends, recruiting dynein to membranous cargos and enhancing dynein processivity (the ability to move along a microtubule for a long distance without falling off the track). Can also act as a brake to slow the dynein motor during motility along the microtubule. Can regulate microtubule stability by promoting microtubule formation, nucleation and polymerization and by inhibiting microtubule catastrophe in neurons. Inhibits microtubule catastrophe by binding both to microtubules and to tubulin, leading to enhanced microtubule stability along the axon. Plays a role in metaphase spindle orientation. Plays a role in centriole cohesion and subdistal appendage organization and function. Its recruitment to the centriole in a KIF3A-dependent manner is essential for the maintenance of centriole cohesion and the formation of subdistal appendage. Also required for microtubule anchoring at the mother centriole. Plays a role in primary cilia formation. The polypeptide is Dynactin subunit 1 (Homo sapiens (Human)).